Here is a 247-residue protein sequence, read N- to C-terminus: E3 SUMO-protein ligase NSE2 (247 aa).

Met1 carries the post-translational modification N-acetylmethionine. Residues Lys90 and Lys107 each participate in a glycyl lysine isopeptide (Lys-Gly) (interchain with G-Cter in SUMO2) cross-link. Ser116 carries the post-translational modification Phosphoserine. Residues Lys125 and Lys130 each participate in a glycyl lysine isopeptide (Lys-Gly) (interchain with G-Cter in SUMO2) cross-link. The segment at 154–240 adopts an SP-RING-type zinc-finger fold; sequence VDEDIIVTQS…LRRAIENHNK (87 aa). 4 residues coordinate Zn(2+): Cys185, His187, Cys210, and Cys215.

It belongs to the NSE2 family. In terms of assembly, component of the SMC5-SMC6 complex which consists at least of SMC5, SMC6, NSMCE2, NSMCE1, NSMCE4A or EID3 and NSMCE3. Sumoylated, possibly via autosumoylation.

The protein localises to the nucleus. It localises to the chromosome. The protein resides in the telomere. It is found in the PML body. Its pathway is protein modification; protein sumoylation. In terms of biological role, E3 SUMO-protein ligase component of the SMC5-SMC6 complex, a complex involved in DNA double-strand break repair by homologous recombination. Is not be required for the stability of the complex. The complex may promote sister chromatid homologous recombination by recruiting the SMC1-SMC3 cohesin complex to double-strand breaks. The complex is required for telomere maintenance via recombination in ALT (alternative lengthening of telomeres) cell lines and mediates sumoylation of shelterin complex (telosome) components which is proposed to lead to shelterin complex disassembly in ALT-associated PML bodies (APBs). Acts as an E3 ligase mediating SUMO attachment to various proteins such as SMC6L1 and TSNAX, the shelterin complex subunits TERF1, TERF2, TINF2 and TERF2IP, RAD51AP1, and maybe the cohesin components RAD21 and STAG2. Required for recruitment of telomeres to PML nuclear bodies. SUMO protein-ligase activity is required for the prevention of DNA damage-induced apoptosis by facilitating DNA repair, and for formation of APBs in ALT cell lines. Required for sister chromatid cohesion during prometaphase and mitotic progression. The sequence is that of E3 SUMO-protein ligase NSE2 (NSMCE2) from Homo sapiens (Human).